The primary structure comprises 285 residues: RVSIPSVSKEHNRANAIFSRMGYVNFTDDETIWDDNDDDETIWDNSTESTKPSDEFFRVVGGEDAKPGQFPWQVLLNGETEAFCGGSIVNEKWIVTAAHCILPGIKIEVVAGKHNIEKKEDTEQRRNVTQIILHHSYNASFNKYSHDIALLELDKPLSLNSYVTPICIANREYTNIFLKFGAGYVSGWGKLFSQGRTASILQYLRVPLVDRATCLRSTKFTIYNNMFCAGFHEGGRDSCQGDSGGPHVTEVEGTNFLTGIISWGEECAMKGKYGIYTKVSRYVNW.

Y23 is modified (sulfotyrosine). N25 carries an N-linked (GlcNAc...) asparagine glycan. The residue at position 27 (T27) is a Phosphothreonine; alternate. T27 carries an O-linked (GalNAc...) threonine; alternate glycan. The N-linked (GlcNAc...) asparagine glycan is linked to N45. T47 carries an O-linked (GalNAc...) threonine glycan. Residues 59-285 (VVGGEDAKPG…YTKVSRYVNW (227 aa)) form the Peptidase S1 domain. C84 and C100 are disulfide-bonded. Catalysis depends on H99, which acts as the Charge relay system. Residues N115, E120, and E123 each contribute to the Ca(2+) site. Residues N127 and N138 are each glycosylated (N-linked (GlcNAc...) asparagine). D147 acts as the Charge relay system in catalysis. 2 disulfide bridges follow: C214–C228 and C239–C267. S243 functions as the Charge relay system in the catalytic mechanism.

It belongs to the peptidase S1 family. Heterodimer of a light chain and a heavy chain; disulfide-linked. Interacts (inactive and activated) with F11 (activated) in calcium-dependent manner. Interacts with SERPINC1. In terms of processing, activated by factor XIa, which excises the activation peptide. The propeptide can also be removed by snake venom protease. Activated by coagulation factor VIIa-tissue factor (F7-F3) complex in calcium-dependent manner.

It is found in the secreted. The catalysed reaction is Selective cleavage of Arg-|-Ile bond in factor X to form factor Xa.. Its function is as follows. Factor IX is a vitamin K-dependent plasma protein that participates in the intrinsic pathway of blood coagulation by converting factor X to its active form in the presence of Ca(2+) ions, phospholipids, and factor VIIIa. This chain is Coagulation factor IX (F9), found in Cavia porcellus (Guinea pig).